A 362-amino-acid chain; its full sequence is Ribosome-binding ATPase YchF (362 aa).

The region spanning 2 to 258 is the OBG-type G domain; sequence LSAGIVGLPN…LDANGRQDWL (257 aa). ATP is bound at residue 11 to 16; that stretch reads NVGKST. Mg(2+) contacts are provided by Ser15 and Thr35. Positions 281 to 347 constitute a TGS domain; it reads GLWSFFTFGK…EAKKQGLVRL (67 aa).

This sequence belongs to the TRAFAC class OBG-HflX-like GTPase superfamily. OBG GTPase family. YchF/OLA1 subfamily. It depends on Mg(2+) as a cofactor.

Its function is as follows. ATPase that binds to both the 70S ribosome and the 50S ribosomal subunit in a nucleotide-independent manner. The protein is Ribosome-binding ATPase YchF of Mycoplasma pneumoniae (strain ATCC 29342 / M129 / Subtype 1) (Mycoplasmoides pneumoniae).